Here is a 664-residue protein sequence, read N- to C-terminus: DNA mismatch repair protein MutL (664 aa).

The segment at 382-447 is disordered; it reads RKAGQEQQLQ…YGEPAPSKQQ (66 aa). Over residues 427 to 436 the composition is skewed to polar residues; sequence RHTTSSNQSE.

Belongs to the DNA mismatch repair MutL/HexB family.

In terms of biological role, this protein is involved in the repair of mismatches in DNA. It is required for dam-dependent methyl-directed DNA mismatch repair. May act as a 'molecular matchmaker', a protein that promotes the formation of a stable complex between two or more DNA-binding proteins in an ATP-dependent manner without itself being part of a final effector complex. This is DNA mismatch repair protein MutL from Vibrio vulnificus (strain CMCP6).